Reading from the N-terminus, the 438-residue chain is MLNYDIAVIGGGIAGYCAALNAIEAGKKTVLISQGQSALHFSSGSIDVMAKTPSGERVEAPFSAMASLPQQHPEHPYSKMLPNFVRQSLYWLVDQLKEQGLPLHCQQDESNHYRITPLGTLKATWLSQPFVYQHRQNVAFKRLLFVAVDGYRDFQPLLAKDNLKKHPDFQHCEIGEIQVTIPGCEALRRNPNELRSIDIARLLKQPQAFNSLCHQLMKHATQEDLVIMPAIMGNGDGLVLLQQLRRQTNLTLHEVPTMPPSLLGIRIEEALQKRFLKQGGVLLKGDQVLSGEWDEQGHLTSISTRNLGDIPLHAQAYILASGSYFSQGLKASLDKIVEPIFGLDMVAKPHRRQWRNDQFFSASAHPFMAFGVETDAMFRPSLNGQVCQNLYCCGSVLSGYDPVFEGSGGGVAVSTALAAVQRAMGLKQAMSVEEECVL.

This sequence belongs to the anaerobic G-3-P dehydrogenase subunit B family. As to quaternary structure, composed of a catalytic GlpA/B dimer and of membrane bound GlpC. FMN is required as a cofactor.

It catalyses the reaction a quinone + sn-glycerol 3-phosphate = dihydroxyacetone phosphate + a quinol. It functions in the pathway polyol metabolism; glycerol degradation via glycerol kinase pathway; glycerone phosphate from sn-glycerol 3-phosphate (anaerobic route): step 1/1. Functionally, conversion of glycerol 3-phosphate to dihydroxyacetone. Uses fumarate or nitrate as electron acceptor. This Vibrio vulnificus (strain CMCP6) protein is Anaerobic glycerol-3-phosphate dehydrogenase subunit B.